We begin with the raw amino-acid sequence, 115 residues long: Putative membrane protein insertion efficiency factor (115 aa).

Belongs to the UPF0161 family.

The protein resides in the cell membrane. Could be involved in insertion of integral membrane proteins into the membrane. The sequence is that of Putative membrane protein insertion efficiency factor from Mycolicibacterium paratuberculosis (strain ATCC BAA-968 / K-10) (Mycobacterium paratuberculosis).